Reading from the N-terminus, the 207-residue chain is SPRY domain-containing protein 4 (207 aa).

The B30.2/SPRY domain occupies 12 to 207; that stretch reads YRWGTKRWGV…HSGLEVPKGL (196 aa). An N6-acetyllysine mark is found at Lys53 and Lys130. Lys139 is modified (N6-succinyllysine).

The polypeptide is SPRY domain-containing protein 4 (Spryd4) (Mus musculus (Mouse)).